We begin with the raw amino-acid sequence, 353 residues long: Ribosomal RNA small subunit methyltransferase H (353 aa).

S-adenosyl-L-methionine is bound by residues 50-52 (GGY), D69, F96, D117, and Q124. A disordered region spans residues 276-353 (AAQASRHVPG…PAPQGRGPRR (78 aa)).

It belongs to the methyltransferase superfamily. RsmH family.

It is found in the cytoplasm. It catalyses the reaction cytidine(1402) in 16S rRNA + S-adenosyl-L-methionine = N(4)-methylcytidine(1402) in 16S rRNA + S-adenosyl-L-homocysteine + H(+). Its function is as follows. Specifically methylates the N4 position of cytidine in position 1402 (C1402) of 16S rRNA. In Methylorubrum extorquens (strain CM4 / NCIMB 13688) (Methylobacterium extorquens), this protein is Ribosomal RNA small subunit methyltransferase H.